The primary structure comprises 398 residues: Apolipoprotein L1 (398 aa).

A signal peptide spans 1-27 (MEGAALLRVSVLCIWMSALFLGVGVRA). Over residues 35 to 47 (QQNVPSGTDTGDP) the composition is skewed to polar residues. The tract at residues 35–55 (QQNVPSGTDTGDPQSKPLGDW) is disordered. The N-linked (GlcNAc...) asparagine glycan is linked to N261. The tract at residues 297–317 (PHASASRPRVTEPISAESGEQ) is disordered. Residues S311 and S314 each carry the phosphoserine; by FAM20C modification.

The protein belongs to the apolipoprotein L family. As to quaternary structure, in plasma, interacts with APOA1 and mainly associated with large high density lipoprotein particles. Post-translationally, phosphorylated by FAM20C in the extracellular medium. As to expression, plasma. Found on APOA-I-containing high density lipoprotein (HDL3). Expressed in pancreas, lung, prostate, liver, placenta and spleen.

Its subcellular location is the secreted. In terms of biological role, may play a role in lipid exchange and transport throughout the body. May participate in reverse cholesterol transport from peripheral cells to the liver. In Homo sapiens (Human), this protein is Apolipoprotein L1 (APOL1).